A 619-amino-acid chain; its full sequence is Zinc finger and BTB domain-containing protein 7C (619 aa).

Residues 34-101 enclose the BTB domain; it reads CDVLLVVQEQ…AYTSTLTITA (68 aa). Positions 129-218 are disordered; the sequence is PGGDGGEEDD…DSFQAGSPGH (90 aa). Residues 133–173 show a composition bias toward acidic residues; sequence GGEEDDKEDDDDDEDDDDEEDEEEEEEEEEDDDDDTEDFAD. Positions 191-208 are enriched in basic and acidic residues; it reads KTDHLTEKAYSDTPRDFP. 3 C2H2-type zinc fingers span residues 364–386, 392–414, and 420–442; these read QQCPICHKVIMGAGKLPRHMRTH, YMCTICEVRFTRQDKLKIHMRKH, and YLCIHCNAKFVHNYDLKNHMRIH. The segment at 448–478 adopts a C2H2-type 4; degenerate zinc-finger fold; that stretch reads YQCEFCYKSFTRSDHLHRHIKRQSCRMARPR.

In terms of tissue distribution, detected in normal cervical keratinocytes, and in some cervical carcinoma cell lines.

Functionally, may be a tumor suppressor gene. This chain is Zinc finger and BTB domain-containing protein 7C (ZBTB7C), found in Homo sapiens (Human).